We begin with the raw amino-acid sequence, 79 residues long: Cyclin-dependent kinases regulatory subunit 2 (79 aa).

The protein belongs to the CKS family. Forms a homohexamer that can probably bind six kinase subunits.

Functionally, binds to the catalytic subunit of the cyclin dependent kinases and is essential for their biological function. The sequence is that of Cyclin-dependent kinases regulatory subunit 2 (cks2) from Xenopus laevis (African clawed frog).